A 245-amino-acid chain; its full sequence is Tetraspanin-6 (245 aa).

Topologically, residues 1 to 19 (MASPSRRLQTKPVITCFKS) are cytoplasmic. The helical transmembrane segment at 20–40 (VLLIYTFIFWITGVILLAVGI) threads the bilayer. Over 41 to 59 (WGKVSLENYFSLLNEKATN) the chain is Extracellular. A helical transmembrane segment spans residues 60 to 80 (VPFVLIGTGTVIILLGTFGCF). Topologically, residues 81 to 93 (ATCRASAWMLKLY) are cytoplasmic. Residues 94 to 114 (AMFLTLIFLVELVAAIIGFVF) traverse the membrane as a helical segment. Over 115 to 208 (RHEIKNSLKN…IMVMTIIESE (94 aa)) the chain is Extracellular. Residue N134 is glycosylated (N-linked (GlcNAc...) asparagine). The chain crosses the membrane as a helical span at residues 209 to 229 (MGVVAGISFGVACFQLIGIFL). The Cytoplasmic portion of the chain corresponds to 230–245 (AYCLSRAITNNQYEIV).

It belongs to the tetraspanin (TM4SF) family.

The protein resides in the membrane. This chain is Tetraspanin-6 (TSPAN6), found in Bos taurus (Bovine).